We begin with the raw amino-acid sequence, 129 residues long: MKEVIDTVGRRKTSVARVFMTPGKGRVIINKLPVEEYFKDEVRRSKALRPLALTERTEEFDIKVNVQGGGITGQSGAVSLGIARALTEFDETVRPILKTEKLLTRDPRMVERKKFGRKKARKRFQFSKR.

The protein belongs to the universal ribosomal protein uS9 family.

The protein is Small ribosomal subunit protein uS9 of Chlorobium limicola (strain DSM 245 / NBRC 103803 / 6330).